We begin with the raw amino-acid sequence, 444 residues long: Phosphoglucosamine mutase (444 aa).

The active-site Phosphoserine intermediate is Ser-102. Residues Ser-102, Asp-241, Asp-243, and Asp-245 each coordinate Mg(2+). Ser-102 carries the post-translational modification Phosphoserine.

Belongs to the phosphohexose mutase family. Requires Mg(2+) as cofactor. Activated by phosphorylation.

It carries out the reaction alpha-D-glucosamine 1-phosphate = D-glucosamine 6-phosphate. In terms of biological role, catalyzes the conversion of glucosamine-6-phosphate to glucosamine-1-phosphate. This Histophilus somni (strain 129Pt) (Haemophilus somnus) protein is Phosphoglucosamine mutase.